The following is a 217-amino-acid chain: Translation initiation factor 6 (217 aa).

The protein belongs to the eIF-6 family.

Its function is as follows. Binds to the 50S ribosomal subunit and prevents its association with the 30S ribosomal subunit to form the 70S initiation complex. The chain is Translation initiation factor 6 from Methanococcoides burtonii (strain DSM 6242 / NBRC 107633 / OCM 468 / ACE-M).